The sequence spans 946 residues: Protein translocase subunit SecA (946 aa).

ATP-binding positions include Gln-87, 105 to 109, and Asp-524; that span reads GEGKT. Positions 904-933 are disordered; that stretch reads PAQTTDKADRDPNKPETWGKVGRNEDCPCG. The Zn(2+) site is built by Cys-930, Cys-932, Cys-941, and His-942.

Belongs to the SecA family. In terms of assembly, monomer and homodimer. Part of the essential Sec protein translocation apparatus which comprises SecA, SecYEG and auxiliary proteins SecDF-YajC and YidC. It depends on Zn(2+) as a cofactor.

The protein resides in the cell inner membrane. It localises to the cytoplasm. It catalyses the reaction ATP + H2O + cellular proteinSide 1 = ADP + phosphate + cellular proteinSide 2.. Functionally, part of the Sec protein translocase complex. Interacts with the SecYEG preprotein conducting channel. Has a central role in coupling the hydrolysis of ATP to the transfer of proteins into and across the cell membrane, serving both as a receptor for the preprotein-SecB complex and as an ATP-driven molecular motor driving the stepwise translocation of polypeptide chains across the membrane. The chain is Protein translocase subunit SecA from Rhodopseudomonas palustris (strain TIE-1).